A 333-amino-acid chain; its full sequence is Heat shock transcription factor, X-linked member 3 (333 aa).

The segment at 1–66 (MASQNTEQEY…QDNSPPEDRN (66 aa)) is disordered. Positions 29–39 (GSSPDPNPDSS) are enriched in low complexity. Residues 49 to 60 (AMSQDPGSQDNS) are compositionally biased toward polar residues. A DNA-binding region spans residues 79–182 (FRLSFPRKLW…PRLLENIQRK (104 aa)). Residues 227–275 (QGAPSVQGPSGTQSFRRSGMWSKKSATRHPLGNGPPQEPNGPSWEGTSG) are disordered. Residues 228 to 242 (GAPSVQGPSGTQSFR) are compositionally biased toward polar residues.

Belongs to the HSF family.

The protein localises to the nucleus. The chain is Heat shock transcription factor, X-linked member 3 from Homo sapiens (Human).